A 430-amino-acid chain; its full sequence is MGKNVVVLGTQWGDEGKGKIVDLLTEHATAVVRYQGGHNAGHTLVIDGEKTVLHLIPSGVLREGVQCLIGNGVVVAPDALLREIIKLEEKGIPVRERLRISPSCPLILSYHVALDQAREKARGEFKIGTTGRGIGPAYEDKVARRGLRIGDLFHRERFAAKLGELLDYHNFVLVNYYKEPAIDFQKTLDECMEYADMLKPLMLDVTAALHEMRRDGKDIMFEGAQGSLLDIDHGTYPYVTSSNTTAGGIATGSGFGPMYLDYILGITKAYTTRVGSGPFPTELFDDVGAFLAKRGHEFGATTGRARRCGWFDAVILRRAIEINSISGLCLTKLDVLDGLETINICIGYENEEGAVIDAPTDADSYLGLRPVYEEMPGWSESTLGAKTLEELPAAARAYIKRVEELVGAPIDIISTGPDRNETIVLRHPFG.

GTP is bound by residues 13-19 and 41-43; these read GDEGKGK and GHT. Asp14 functions as the Proton acceptor in the catalytic mechanism. Residues Asp14 and Gly41 each contribute to the Mg(2+) site. Residues 14-17, 39-42, Thr130, Arg144, Gln225, Thr240, and Arg304 contribute to the IMP site; these read DEGK and NAGH. His42 (proton donor) is an active-site residue. 300–306 lines the substrate pocket; sequence ATTGRAR. GTP contacts are provided by residues Arg306, 332 to 334, and 414 to 416; these read KLD and STG.

Belongs to the adenylosuccinate synthetase family. Homodimer. Requires Mg(2+) as cofactor.

Its subcellular location is the cytoplasm. The enzyme catalyses IMP + L-aspartate + GTP = N(6)-(1,2-dicarboxyethyl)-AMP + GDP + phosphate + 2 H(+). It participates in purine metabolism; AMP biosynthesis via de novo pathway; AMP from IMP: step 1/2. Functionally, plays an important role in the de novo pathway of purine nucleotide biosynthesis. Catalyzes the first committed step in the biosynthesis of AMP from IMP. The chain is Adenylosuccinate synthetase from Pseudomonas syringae pv. tomato (strain ATCC BAA-871 / DC3000).